A 379-amino-acid chain; its full sequence is Acyl-CoA dehydrogenase (379 aa).

It belongs to the acyl-CoA dehydrogenase family. It depends on FAD as a cofactor.

The catalysed reaction is a 2,3-saturated acyl-CoA + A = a 2,3-dehydroacyl-CoA + AH2. The sequence is that of Acyl-CoA dehydrogenase (mmgC) from Bacillus subtilis (strain 168).